Reading from the N-terminus, the 376-residue chain is Pre-mRNA-splicing factor cwf25 (376 aa).

Residues 25 to 60 (KDEQAHKEEMKRVEQLRREIEEERQLLELHRLQEAA) adopt a coiled-coil conformation. Disordered stretches follow at residues 153 to 211 (LMEK…DRNN) and 258 to 289 (RTSRQYSRSPSPDFRTRNHQFHSRDSQPITQR). Residues 154–167 (MEKRKYSLDSDRKS) show a composition bias toward basic and acidic residues. Residues 168 to 178 (KERRHRDRHHR) are compositionally biased toward basic residues. Residues 179–199 (SNQDRSRERSDNEQHSSDKRE) are compositionally biased toward basic and acidic residues. Phosphoserine is present on residues serine 266 and serine 268. The stretch at 286 to 334 (ITQRHTDIESRLQKMQDNAKELDESRRKKIELLEKKERDEEQFLEKERR) forms a coiled coil.

The protein belongs to the CWC25 family. As to quaternary structure, belongs to the 40S cdc5-associated complex (or cwf complex), a spliceosome sub-complex reminiscent of a late-stage spliceosome composed of the U2, U5 and U6 snRNAs and at least brr2, cdc5, cwf2/prp3, cwf3/syf1, cwf4/syf3, cwf5/ecm2, spp42/cwf6, cwf7/spf27, cwf8, cwf9, cwf10, cwf11, cwf12, prp45/cwf13, cwf14, cwf15, cwf16, cwf17, cwf18, cwf19, cwf20, cwf21, cwf22, cwf23, cwf24, cwf25, cwf26, cyp7/cwf27, cwf28, cwf29/ist3, lea1, msl1, prp5/cwf1, prp10, prp12/sap130, prp17, prp22, sap61, sap62, sap114, sap145, slu7, smb1, smd1, smd3, smf1, smg1 and syf2.

Its subcellular location is the nucleus. Involved in mRNA splicing. This Schizosaccharomyces pombe (strain 972 / ATCC 24843) (Fission yeast) protein is Pre-mRNA-splicing factor cwf25 (cwf25).